We begin with the raw amino-acid sequence, 415 residues long: tRNA(Ile2) 2-agmatinylcytidine synthetase TiaS (415 aa).

This sequence belongs to the TiaS family.

It is found in the cytoplasm. The enzyme catalyses cytidine(34) in tRNA(Ile2) + agmatine + ATP + H2O = 2-agmatinylcytidine(34) in tRNA(Ile2) + AMP + 2 phosphate + 2 H(+). Its function is as follows. ATP-dependent agmatine transferase that catalyzes the formation of 2-agmatinylcytidine (agm2C) at the wobble position (C34) of tRNA(Ile2), converting the codon specificity from AUG to AUA. The protein is tRNA(Ile2) 2-agmatinylcytidine synthetase TiaS of Methanocorpusculum labreanum (strain ATCC 43576 / DSM 4855 / Z).